Reading from the N-terminus, the 239-residue chain is Phosducin-like protein 3 (239 aa).

M1 bears the N-acetylmethionine mark. The region spanning 32-180 (EAEEEQRILQ…EGDIKAQFIG (149 aa)) is the Phosducin domain. Residue S43 is modified to Phosphoserine. The tract at residues 91–239 (FGEVLEISGK…MKRDSDSEGD (149 aa)) is thioredoxin fold. Interaction with XIAP stretches follow at residues 97-99 (ISG) and 153-155 (TCI). Residues S234 and S236 each carry the phosphoserine modification.

Belongs to the phosducin family. As to quaternary structure, interacts (via thioredoxin fold region) with KDR/VEGFR2 (via juxtamembrane domain). Forms ternary complexes with the chaperonin CCT complex and actin substrate, leading to inhibition of actin folding. Interacts with XIAP (via BIR 3 and RING domain). Interacts with HSP90AA1 and HSP90AB1. N-terminal methionine acetylation destabilizes the protein. Expressed in endothelial cells (at protein level). Expressed in all tissues examined including spleen, thymus, prostate, testis, ovary, small intestine and colon.

Its subcellular location is the cytoplasm. The protein resides in the perinuclear region. The protein localises to the endoplasmic reticulum. In terms of biological role, acts as a chaperone for the angiogenic VEGF receptor KDR/VEGFR2, increasing its abundance by inhibiting its ubiquitination and degradation. Inhibits the folding activity of the chaperonin-containing T-complex (CCT) which leads to inhibition of cytoskeletal actin folding. Acts as a chaperone during heat shock alongside HSP90 and HSP40/70 chaperone complexes. Modulates the activation of caspases during apoptosis. In Homo sapiens (Human), this protein is Phosducin-like protein 3 (PDCL3).